Here is a 410-residue protein sequence, read N- to C-terminus: Protein translocase subunit SecY (410 aa).

9 helical membrane-spanning segments follow: residues 61–81 (LSVFALGIIPYINATITIQIL), 106–126 (ITKYLSFCFAFIESLAIVLRL), 135–155 (LYFIVQTTLILISGAMLVMWL), 170–190 (VIIFVNIASAFAKFLLNQLFV), 195–215 (FLDFASYFALIVFSIACIVFV), 248–268 (QGGVMPIILASSLLALVDYVI), 289–309 (ILFLLLYSAFIIFFNYLYCSL), 349–369 (LFGSGFLAFIVLAPNFLEFVF), and 373–393 (VFKGLAVSSLLIVVGVAIDLI).

Belongs to the SecY/SEC61-alpha family. As to quaternary structure, component of the plastid Sec protein translocase complex, which is composed of at least SecY and SecE.

The protein resides in the plastid. It is found in the chloroplast thylakoid membrane. In terms of biological role, the central subunit of the protein translocation channel SecYE. Consists of two halves formed by TMs 1-5 and 6-10. These two domains form a lateral gate at the front which open onto the bilayer between TMs 2 and 7, and are clamped together by SecE at the back. The channel is closed by both a pore ring composed of hydrophobic SecY resides and a short helix (helix 2A) on the extracellular side of the membrane which forms a plug. The chain is Protein translocase subunit SecY from Cyanidium caldarium (Red alga).